The chain runs to 248 residues: Pyridoxine 5'-phosphate synthase (248 aa).

Asn-10 provides a ligand contact to 3-amino-2-oxopropyl phosphate. 12–13 is a 1-deoxy-D-xylulose 5-phosphate binding site; it reads DH. Arg-21 provides a ligand contact to 3-amino-2-oxopropyl phosphate. The active-site Proton acceptor is the His-46. 1-deoxy-D-xylulose 5-phosphate contacts are provided by Arg-48 and His-53. Catalysis depends on Glu-73, which acts as the Proton acceptor. Thr-103 serves as a coordination point for 1-deoxy-D-xylulose 5-phosphate. The active-site Proton donor is His-194. 3-amino-2-oxopropyl phosphate contacts are provided by residues Gly-195 and 216-217; that span reads GH.

Belongs to the PNP synthase family. In terms of assembly, homooctamer; tetramer of dimers.

It is found in the cytoplasm. The enzyme catalyses 3-amino-2-oxopropyl phosphate + 1-deoxy-D-xylulose 5-phosphate = pyridoxine 5'-phosphate + phosphate + 2 H2O + H(+). Its pathway is cofactor biosynthesis; pyridoxine 5'-phosphate biosynthesis; pyridoxine 5'-phosphate from D-erythrose 4-phosphate: step 5/5. Its function is as follows. Catalyzes the complicated ring closure reaction between the two acyclic compounds 1-deoxy-D-xylulose-5-phosphate (DXP) and 3-amino-2-oxopropyl phosphate (1-amino-acetone-3-phosphate or AAP) to form pyridoxine 5'-phosphate (PNP) and inorganic phosphate. The chain is Pyridoxine 5'-phosphate synthase from Legionella pneumophila (strain Corby).